The chain runs to 150 residues: Phosphoribosyl-AMP cyclohydrolase (150 aa).

Position 93 (Asp93) interacts with Mg(2+). Residue Cys94 participates in Zn(2+) binding. 2 residues coordinate Mg(2+): Asp95 and Asp97. Zn(2+) is bound by residues Cys112 and Cys119.

It belongs to the PRA-CH family. As to quaternary structure, homodimer. It depends on Mg(2+) as a cofactor. The cofactor is Zn(2+).

The protein localises to the cytoplasm. It carries out the reaction 1-(5-phospho-beta-D-ribosyl)-5'-AMP + H2O = 1-(5-phospho-beta-D-ribosyl)-5-[(5-phospho-beta-D-ribosylamino)methylideneamino]imidazole-4-carboxamide. Its pathway is amino-acid biosynthesis; L-histidine biosynthesis; L-histidine from 5-phospho-alpha-D-ribose 1-diphosphate: step 3/9. Functionally, catalyzes the hydrolysis of the adenine ring of phosphoribosyl-AMP. The sequence is that of Phosphoribosyl-AMP cyclohydrolase from Rhizobium etli (strain ATCC 51251 / DSM 11541 / JCM 21823 / NBRC 15573 / CFN 42).